A 31-amino-acid chain; its full sequence is Cytochrome b6-f complex subunit 6 (31 aa).

Residues 4 to 24 form a helical membrane-spanning segment; it reads ITSYFGFLLAALTITSVLFIG.

The protein belongs to the PetL family. In terms of assembly, the 4 large subunits of the cytochrome b6-f complex are cytochrome b6, subunit IV (17 kDa polypeptide, PetD), cytochrome f and the Rieske protein, while the 4 small subunits are PetG, PetL, PetM and PetN. The complex functions as a dimer.

The protein resides in the plastid. The protein localises to the chloroplast thylakoid membrane. Component of the cytochrome b6-f complex, which mediates electron transfer between photosystem II (PSII) and photosystem I (PSI), cyclic electron flow around PSI, and state transitions. PetL is important for photoautotrophic growth as well as for electron transfer efficiency and stability of the cytochrome b6-f complex. The sequence is that of Cytochrome b6-f complex subunit 6 from Nandina domestica (Heavenly bamboo).